Here is a 155-residue protein sequence, read N- to C-terminus: Ribosomal RNA large subunit methyltransferase H (155 aa).

S-adenosyl-L-methionine contacts are provided by residues Gly-104 and 123-128; that span reads LSAMTF.

Belongs to the RNA methyltransferase RlmH family. As to quaternary structure, homodimer.

It is found in the cytoplasm. It catalyses the reaction pseudouridine(1915) in 23S rRNA + S-adenosyl-L-methionine = N(3)-methylpseudouridine(1915) in 23S rRNA + S-adenosyl-L-homocysteine + H(+). Functionally, specifically methylates the pseudouridine at position 1915 (m3Psi1915) in 23S rRNA. The chain is Ribosomal RNA large subunit methyltransferase H from Oleidesulfovibrio alaskensis (strain ATCC BAA-1058 / DSM 17464 / G20) (Desulfovibrio alaskensis).